The chain runs to 212 residues: Probable transaldolase (212 aa).

Lys83 functions as the Schiff-base intermediate with substrate in the catalytic mechanism.

It belongs to the transaldolase family. Type 3B subfamily.

It localises to the cytoplasm. The catalysed reaction is D-sedoheptulose 7-phosphate + D-glyceraldehyde 3-phosphate = D-erythrose 4-phosphate + beta-D-fructose 6-phosphate. It functions in the pathway carbohydrate degradation; pentose phosphate pathway; D-glyceraldehyde 3-phosphate and beta-D-fructose 6-phosphate from D-ribose 5-phosphate and D-xylulose 5-phosphate (non-oxidative stage): step 2/3. In terms of biological role, transaldolase is important for the balance of metabolites in the pentose-phosphate pathway. The protein is Probable transaldolase (tal) of Halalkalibacterium halodurans (strain ATCC BAA-125 / DSM 18197 / FERM 7344 / JCM 9153 / C-125) (Bacillus halodurans).